An 828-amino-acid chain; its full sequence is Periplasmic nitrate reductase (828 aa).

A signal peptide (tat-type signal) is located at residues 1 to 31 (MKLSRRSFMKANAVAAAAAAAGLSVPGVARA). The 57-residue stretch at 39-95 (IKWDKAPCRFCGTGCGVLVGTQQGRVVACQGDPDAPVNRGLNCIKGYFLPKIMYGKD) folds into the 4Fe-4S Mo/W bis-MGD-type domain. Residues cysteine 46, cysteine 49, cysteine 53, and cysteine 81 each coordinate [4Fe-4S] cluster. Mo-bis(molybdopterin guanine dinucleotide) contacts are provided by residues lysine 83, glutamine 150, asparagine 175, cysteine 179, 212–219 (WGANMAEM), 243–247 (STYQH), 262–264 (QSD), methionine 372, glutamine 376, asparagine 482, 508–509 (SD), lysine 531, aspartate 558, and 718–727 (TGRVLEHWHT). Phenylalanine 794 serves as a coordination point for substrate. 2 residues coordinate Mo-bis(molybdopterin guanine dinucleotide): asparagine 802 and lysine 819.

Belongs to the prokaryotic molybdopterin-containing oxidoreductase family. NasA/NapA/NarB subfamily. Component of the periplasmic nitrate reductase NapAB complex composed of NapA and NapB. Requires [4Fe-4S] cluster as cofactor. Mo-bis(molybdopterin guanine dinucleotide) serves as cofactor. In terms of processing, predicted to be exported by the Tat system. The position of the signal peptide cleavage has not been experimentally proven.

It localises to the periplasm. The enzyme catalyses 2 Fe(II)-[cytochrome] + nitrate + 2 H(+) = 2 Fe(III)-[cytochrome] + nitrite + H2O. Catalytic subunit of the periplasmic nitrate reductase complex NapAB. Receives electrons from NapB and catalyzes the reduction of nitrate to nitrite. This Escherichia coli O157:H7 (strain EC4115 / EHEC) protein is Periplasmic nitrate reductase.